A 118-amino-acid polypeptide reads, in one-letter code: Small ribosomal subunit protein uS13 (118 aa).

The disordered stretch occupies residues 94 to 118 (SLPLRGQRTKTNARTRKGPRKPIRK).

The protein belongs to the universal ribosomal protein uS13 family. As to quaternary structure, part of the 30S ribosomal subunit. Forms a loose heterodimer with protein S19. Forms two bridges to the 50S subunit in the 70S ribosome.

Its function is as follows. Located at the top of the head of the 30S subunit, it contacts several helices of the 16S rRNA. In the 70S ribosome it contacts the 23S rRNA (bridge B1a) and protein L5 of the 50S subunit (bridge B1b), connecting the 2 subunits; these bridges are implicated in subunit movement. Contacts the tRNAs in the A and P-sites. The chain is Small ribosomal subunit protein uS13 from Shewanella halifaxensis (strain HAW-EB4).